The chain runs to 163 residues: MTRSAALFCRPVPAILFILSLLILDQAIKYAVEVSLPMHELVPVVPMLGLFRTHNLGVAFSMLSHLDAWVIVVMRLAIVAFVAWLWRQTSRDHQFAHLGYCLIIAGAFGNIIDRFTYGYVVDYILFHTETWSFAVFNLADSLITIGAGFILLEELLVLRRSKG.

3 consecutive transmembrane segments (helical) span residues 4–24, 66–86, and 92–112; these read SAALFCRPVPAILFILSLLIL, LDAWVIVVMRLAIVAFVAWLW, and DHQFAHLGYCLIIAGAFGNII. Residues Asp122 and Asp140 contribute to the active site. A helical membrane pass occupies residues 132-152; it reads SFAVFNLADSLITIGAGFILL.

It belongs to the peptidase A8 family.

The protein resides in the cell inner membrane. It catalyses the reaction Release of signal peptides from bacterial membrane prolipoproteins. Hydrolyzes -Xaa-Yaa-Zaa-|-(S,diacylglyceryl)Cys-, in which Xaa is hydrophobic (preferably Leu), and Yaa (Ala or Ser) and Zaa (Gly or Ala) have small, neutral side chains.. It participates in protein modification; lipoprotein biosynthesis (signal peptide cleavage). Its function is as follows. This protein specifically catalyzes the removal of signal peptides from prolipoproteins. This is Lipoprotein signal peptidase from Allorhizobium ampelinum (strain ATCC BAA-846 / DSM 112012 / S4) (Agrobacterium vitis (strain S4)).